The sequence spans 121 residues: Large ribosomal subunit protein uL18 (121 aa).

This sequence belongs to the universal ribosomal protein uL18 family. In terms of assembly, part of the 50S ribosomal subunit; part of the 5S rRNA/L5/L18/L25 subcomplex. Contacts the 5S and 23S rRNAs.

In terms of biological role, this is one of the proteins that bind and probably mediate the attachment of the 5S RNA into the large ribosomal subunit, where it forms part of the central protuberance. This chain is Large ribosomal subunit protein uL18, found in Dehalococcoides mccartyi (strain ATCC BAA-2266 / KCTC 15142 / 195) (Dehalococcoides ethenogenes (strain 195)).